Here is a 329-residue protein sequence, read N- to C-terminus: MEVAEPSSPTEEEEEEEEHSAEPRPRTRSNPEGAEDRAVGAQASVGSRSEGEGEAASADDGSLNTSGAGPKSWQVPPPAPEVQIRTPRVNCPEKVIICLDLSEEMSLPKLESFNGSKTNALNVSQKMIEMFVRTKHKIDKSHEFALVVVNDDTAWLSGLTSDPRELCSCLYDLETASCSTFNLEGLFSLIQQKTELPVTENVQTIPPPYVVRTILVYSRPPCQPQFSLTEPMKKMFQCPYFFFDVVYIHNGTEEKEEEMSWKDMFAFMGSLDTKGTSYKYEVALAGPALELHNCMAKLLAHPLQRPCQSHASYSLLEEEDEAIEVEATV.

Met-1 is modified (N-acetylmethionine). Residues Met-1–Ile-84 form a disordered region. Residue Ser-8 is modified to Phosphoserine. The segment covering Thr-10–His-19 has biased composition (acidic residues). Residues Ser-29, Ser-49, Ser-57, and Ser-62 each carry the phosphoserine modification. The residue at position 65 (Thr-65) is a Phosphothreonine. Ser-66 bears the Phosphoserine mark. Residues Val-95–Leu-298 are VWFA-like.

This sequence belongs to the BABAM1 family. Component of the ARISC complex, at least composed of UIMC1/RAP80, ABRAXAS1, BRCC3/BRCC36, BABAM2 and BABAM1/NBA1. Component of the BRCA1-A complex, at least composed of BRCA1, BARD1, UIMC1/RAP80, ABRAXAS1, BRCC3/BRCC36, BABAM2 and BABAM1/NBA1. In the BRCA1-A complex, interacts directly with ABRAXAS1 and BABAM2. Component of the BRISC complex, at least composed of ABRAXAS2, BRCC3/BRCC36, BABAM2 and BABAM1/NBA1. Identified in a complex with SHMT2 and the other subunits of the BRISC complex.

The protein localises to the cytoplasm. Its subcellular location is the nucleus. Component of the BRCA1-A complex, a complex that specifically recognizes 'Lys-63'-linked ubiquitinated histones H2A and H2AX at DNA lesions sites, leading to target the BRCA1-BARD1 heterodimer to sites of DNA damage at double-strand breaks (DSBs). The BRCA1-A complex also possesses deubiquitinase activity that specifically removes 'Lys-63'-linked ubiquitin on histones H2A and H2AX. In the BRCA1-A complex, it is required for the complex integrity and its localization at DSBs. Component of the BRISC complex, a multiprotein complex that specifically cleaves 'Lys-63'-linked ubiquitin in various substrates. In these 2 complexes, it is probably required to maintain the stability of BABAM2 and help the 'Lys-63'-linked deubiquitinase activity mediated by BRCC3/BRCC36 component. The BRISC complex is required for normal mitotic spindle assembly and microtubule attachment to kinetochores via its role in deubiquitinating NUMA1. Plays a role in interferon signaling via its role in the deubiquitination of the interferon receptor IFNAR1; deubiquitination increases IFNAR1 activity by enhancing its stability and cell surface expression. Down-regulates the response to bacterial lipopolysaccharide (LPS) via its role in IFNAR1 deubiquitination. The protein is BRISC and BRCA1-A complex member 1 (BABAM1) of Homo sapiens (Human).